A 116-amino-acid chain; its full sequence is ATP synthase lipid-binding protein, mitochondrial (116 aa).

The transit peptide at 1-24 directs the protein to the mitochondrion; the sequence is MYCQRLALPLTRSLLASRAPLALR. Residues 57–77 form a helical membrane-spanning segment; that stretch reads VGVAGSGAGIGNVFGALVIGY. The residue at position 84 (K84) is an N6,N6,N6-trimethyllysine. The helical transmembrane segment at 92–112 threads the bilayer; that stretch reads ILGFALSEAMGLFCLTMGFMI.

It belongs to the ATPase C chain family. F-type ATPases have 2 components, CF(1) - the catalytic core - and CF(0) - the membrane proton channel. CF(1) has five subunits: alpha(3), beta(3), gamma(1), delta(1), epsilon(1). CF(0) has three main subunits: a, b and c. Trimethylated by ATPSCKMT at Lys-84. Methylation may be required for proper incorporation of the C subunit into the ATP synthase complex and mitochondrial respiration.

Its subcellular location is the mitochondrion membrane. Its function is as follows. Mitochondrial membrane ATP synthase (F(1)F(0) ATP synthase or Complex V) produces ATP from ADP in the presence of a proton gradient across the membrane which is generated by electron transport complexes of the respiratory chain. F-type ATPases consist of two structural domains, F(1) - containing the extramembraneous catalytic core and F(0) - containing the membrane proton channel, linked together by a central stalk and a peripheral stalk. During catalysis, ATP synthesis in the catalytic domain of F(1) is coupled via a rotary mechanism of the central stalk subunits to proton translocation. Part of the complex F(0) domain. A homomeric c-ring of probably 10 subunits is part of the complex rotary element. In Caenorhabditis briggsae, this protein is ATP synthase lipid-binding protein, mitochondrial.